Consider the following 338-residue polypeptide: Phosphate acyltransferase (338 aa).

It belongs to the PlsX family. As to quaternary structure, homodimer. Probably interacts with PlsY.

The protein localises to the cytoplasm. It carries out the reaction a fatty acyl-[ACP] + phosphate = an acyl phosphate + holo-[ACP]. It functions in the pathway lipid metabolism; phospholipid metabolism. Its function is as follows. Catalyzes the reversible formation of acyl-phosphate (acyl-PO(4)) from acyl-[acyl-carrier-protein] (acyl-ACP). This enzyme utilizes acyl-ACP as fatty acyl donor, but not acyl-CoA. The protein is Phosphate acyltransferase of Salinibacter ruber (strain DSM 13855 / M31).